A 250-amino-acid chain; its full sequence is UPF0246 protein cce_3295 (250 aa).

Belongs to the UPF0246 family.

The chain is UPF0246 protein cce_3295 from Crocosphaera subtropica (strain ATCC 51142 / BH68) (Cyanothece sp. (strain ATCC 51142)).